The chain runs to 98 residues: Small ribosomal subunit protein bS20 (98 aa).

The protein belongs to the bacterial ribosomal protein bS20 family.

Functionally, binds directly to 16S ribosomal RNA. The polypeptide is Small ribosomal subunit protein bS20 (Prochlorococcus marinus (strain NATL1A)).